Here is a 116-residue protein sequence, read N- to C-terminus: Iron-sulfur cluster insertion protein ErpA (116 aa).

Residues Cys-44, Cys-108, and Cys-110 each coordinate iron-sulfur cluster.

The protein belongs to the HesB/IscA family. Homodimer. Iron-sulfur cluster is required as a cofactor.

In terms of biological role, required for insertion of 4Fe-4S clusters for at least IspG. The protein is Iron-sulfur cluster insertion protein ErpA of Pseudomonas syringae pv. syringae (strain B728a).